Consider the following 360-residue polypeptide: Phospho-N-acetylmuramoyl-pentapeptide-transferase (360 aa).

10 consecutive transmembrane segments (helical) span residues 27-47 (GAFM…INVL), 71-91 (TPTM…LLWA), 93-113 (WDNP…LIGF), 134-154 (LALG…NHPA), 168-188 (TLIN…VGSA), 199-219 (GLAI…AYAV), 239-259 (ILIF…YNAP), 262-282 (AVFM…AIAV), 288-308 (LVLA…IIQV), and 337-357 (TIVI…LATL).

It belongs to the glycosyltransferase 4 family. MraY subfamily. Mg(2+) serves as cofactor.

It localises to the cell inner membrane. It catalyses the reaction UDP-N-acetyl-alpha-D-muramoyl-L-alanyl-gamma-D-glutamyl-meso-2,6-diaminopimeloyl-D-alanyl-D-alanine + di-trans,octa-cis-undecaprenyl phosphate = di-trans,octa-cis-undecaprenyl diphospho-N-acetyl-alpha-D-muramoyl-L-alanyl-D-glutamyl-meso-2,6-diaminopimeloyl-D-alanyl-D-alanine + UMP. It functions in the pathway cell wall biogenesis; peptidoglycan biosynthesis. Functionally, catalyzes the initial step of the lipid cycle reactions in the biosynthesis of the cell wall peptidoglycan: transfers peptidoglycan precursor phospho-MurNAc-pentapeptide from UDP-MurNAc-pentapeptide onto the lipid carrier undecaprenyl phosphate, yielding undecaprenyl-pyrophosphoryl-MurNAc-pentapeptide, known as lipid I. This chain is Phospho-N-acetylmuramoyl-pentapeptide-transferase, found in Ruegeria pomeroyi (strain ATCC 700808 / DSM 15171 / DSS-3) (Silicibacter pomeroyi).